The primary structure comprises 438 residues: POU domain, class 3, transcription factor 3-A (438 aa).

Disordered stretches follow at residues 22-43 (VHSE…SVSG), 102-172 (SPWS…QSQQ), and 186-248 (GMLN…PTSD). 2 stretches are compositionally biased toward polar residues: residues 103–123 (PWSS…VKSS) and 146–159 (QSHQ…TASH). Residues 160-172 (ISTITGGQQQSQQ) are compositionally biased toward low complexity. A compositionally biased stretch (basic residues) spans 210-230 (HHHHHHHQQQHPHHHHHHQHH). The POU-specific domain maps to 242–316 (EDTPTSDDLE…LLNKWLEEAD (75 aa)). The homeobox DNA-binding region spans 334 to 393 (KRKKRTSIEVSVKGALESHFLKCPKPSAQEITSLADNLQLEKEVVRVWFCNRRQKEKRMT).

This sequence belongs to the POU transcription factor family. Class-3 subfamily. As to expression, predominantly expressed in the embryonic and adult central nervous system. In adults, isoform 2 is expressed in the brain, ovary, basal cells of the skin and muscle satellite cells.

The protein resides in the nucleus. Its function is as follows. Transcription factor that may play important roles in patterning the embryonic brain. The protein is POU domain, class 3, transcription factor 3-A (pou3f3a) of Danio rerio (Zebrafish).